Here is a 343-residue protein sequence, read N- to C-terminus: Heat-inducible transcription repressor HrcA (343 aa).

The protein belongs to the HrcA family.

Negative regulator of class I heat shock genes (grpE-dnaK-dnaJ and groELS operons). Prevents heat-shock induction of these operons. This chain is Heat-inducible transcription repressor HrcA, found in Clostridium acetobutylicum (strain ATCC 824 / DSM 792 / JCM 1419 / IAM 19013 / LMG 5710 / NBRC 13948 / NRRL B-527 / VKM B-1787 / 2291 / W).